Consider the following 204-residue polypeptide: Holliday junction branch migration complex subunit RuvA (204 aa).

Residues 1 to 64 (MIGHLTGRLV…EDAHLLFGFS (64 aa)) form a domain I region. Positions 65–143 (QKTDRTLFRE…GIQQEDFFIE (79 aa)) are domain II. A flexible linker region spans residues 144–155 (SQHLKQPEHALN). The domain III stretch occupies residues 156–204 (EQDIPASEAISALIALGYKAAEAEKLVKKISKPALSSEQLIREALKAAL).

It belongs to the RuvA family. As to quaternary structure, homotetramer. Forms an RuvA(8)-RuvB(12)-Holliday junction (HJ) complex. HJ DNA is sandwiched between 2 RuvA tetramers; dsDNA enters through RuvA and exits via RuvB. An RuvB hexamer assembles on each DNA strand where it exits the tetramer. Each RuvB hexamer is contacted by two RuvA subunits (via domain III) on 2 adjacent RuvB subunits; this complex drives branch migration. In the full resolvosome a probable DNA-RuvA(4)-RuvB(12)-RuvC(2) complex forms which resolves the HJ.

It localises to the cytoplasm. Its function is as follows. The RuvA-RuvB-RuvC complex processes Holliday junction (HJ) DNA during genetic recombination and DNA repair, while the RuvA-RuvB complex plays an important role in the rescue of blocked DNA replication forks via replication fork reversal (RFR). RuvA specifically binds to HJ cruciform DNA, conferring on it an open structure. The RuvB hexamer acts as an ATP-dependent pump, pulling dsDNA into and through the RuvAB complex. HJ branch migration allows RuvC to scan DNA until it finds its consensus sequence, where it cleaves and resolves the cruciform DNA. This is Holliday junction branch migration complex subunit RuvA from Pasteurella multocida (strain Pm70).